A 412-amino-acid chain; its full sequence is Peptidase T (412 aa).

Zn(2+) is bound at residue histidine 84. Residue aspartate 86 is part of the active site. Aspartate 146 serves as a coordination point for Zn(2+). Catalysis depends on glutamate 179, which acts as the Proton acceptor. Residues glutamate 180, aspartate 202, and histidine 385 each contribute to the Zn(2+) site.

Belongs to the peptidase M20B family. The cofactor is Zn(2+).

It localises to the cytoplasm. The catalysed reaction is Release of the N-terminal residue from a tripeptide.. Its function is as follows. Cleaves the N-terminal amino acid of tripeptides. This chain is Peptidase T, found in Haemophilus influenzae (strain 86-028NP).